The following is a 455-amino-acid chain: Ribulose bisphosphate carboxylase large chain (455 aa).

N6,N6,N6-trimethyllysine is present on K5. Residues N114 and T164 each contribute to the substrate site. Residue K166 is the Proton acceptor of the active site. A substrate-binding site is contributed by K168. Positions 192, 194, and 195 each coordinate Mg(2+). N6-carboxylysine is present on K192. Residue H285 is the Proton acceptor of the active site. The substrate site is built by R286, H318, and S370.

The protein belongs to the RuBisCO large chain family. Type I subfamily. Heterohexadecamer of 8 large chains and 8 small chains; disulfide-linked. The disulfide link is formed within the large subunit homodimers. It depends on Mg(2+) as a cofactor. In terms of processing, the disulfide bond which can form in the large chain dimeric partners within the hexadecamer appears to be associated with oxidative stress and protein turnover.

The protein resides in the plastid. The protein localises to the chloroplast. It carries out the reaction 2 (2R)-3-phosphoglycerate + 2 H(+) = D-ribulose 1,5-bisphosphate + CO2 + H2O. The enzyme catalyses D-ribulose 1,5-bisphosphate + O2 = 2-phosphoglycolate + (2R)-3-phosphoglycerate + 2 H(+). Its function is as follows. RuBisCO catalyzes two reactions: the carboxylation of D-ribulose 1,5-bisphosphate, the primary event in carbon dioxide fixation, as well as the oxidative fragmentation of the pentose substrate in the photorespiration process. Both reactions occur simultaneously and in competition at the same active site. The protein is Ribulose bisphosphate carboxylase large chain of Lupinus paraguariensis (Lupine).